Here is a 339-residue protein sequence, read N- to C-terminus: uncharacterized protein (339 aa).

28-35 (GPINSGKT) contributes to the ATP binding site.

This sequence belongs to the archaeal ATPase family.

This is an uncharacterized protein from Pyrococcus abyssi (strain GE5 / Orsay).